A 141-amino-acid polypeptide reads, in one-letter code: Hemoglobin subunit alpha-1/2 (141 aa).

One can recognise a Globin domain in the interval 1–141; that stretch reads VLSAABKSBV…VSTVLTSKYR (141 aa). Phosphoserine is present on Ser-3. 2 positions are modified to N6-succinyllysine: Lys-7 and Lys-11. At Lys-16 the chain carries N6-acetyllysine; alternate. Position 16 is an N6-succinyllysine; alternate (Lys-16). Position 24 is a phosphotyrosine (Tyr-24). Position 35 is a phosphoserine (Ser-35). Lys-40 carries the N6-succinyllysine modification. Ser-49 bears the Phosphoserine mark. An O2-binding site is contributed by His-58. His-87 contributes to the heme b binding site. Residue Ser-102 is modified to Phosphoserine. Thr-108 is subject to Phosphothreonine. A Phosphoserine modification is found at Ser-124. Thr-134 and Thr-137 each carry phosphothreonine. Ser-138 is subject to Phosphoserine.

The protein belongs to the globin family. Heterotetramer of two alpha chains and two beta chains. As to expression, red blood cells.

Its function is as follows. Involved in oxygen transport from the lung to the various peripheral tissues. This Odocoileus virginianus virginianus (Virginia white-tailed deer) protein is Hemoglobin subunit alpha-1/2.